Here is a 520-residue protein sequence, read N- to C-terminus: 5'-nucleotidase domain-containing protein 2 (520 aa).

Aspartate 73 acts as the Nucleophile in catalysis. The Mg(2+) site is built by aspartate 73, aspartate 75, and aspartate 358. Aspartate 75 serves as the catalytic Proton donor.

This sequence belongs to the 5'(3')-deoxyribonucleotidase family. As to quaternary structure, interacts with tyrosine 3-monooxygenase TH; the interaction results in reduced phosphorylation and decreased catalytic activity of TH.

Its subcellular location is the cytoplasm. Its function is as follows. Promotes dephosphorylation of tyrosine 3-monooxygenase TH which decreases TH catalytic activity and leads to reduced synthesis of catecholamines including dopamine, noradrenaline and adrenaline. The exact mechanism of activity is unknown but may act as a phosphatase or promote the activity of phosphatases or may inhibit phosphorylation by acting as a barrier to interfere with protein kinase access. The polypeptide is 5'-nucleotidase domain-containing protein 2 (NT5DC2) (Homo sapiens (Human)).